The following is a 318-amino-acid chain: Protease HtpX homolog (318 aa).

The next 2 helical transmembrane spans lie at 6–26 (TAMLLAFMTALFMFVGFLIGG) and 28–48 (GGMMIAFLIAAGMNFFSYWNS). His-130 contributes to the Zn(2+) binding site. Residue Glu-131 is part of the active site. His-134 provides a ligand contact to Zn(2+). 2 helical membrane-spanning segments follow: residues 145 to 165 (ITATLAGAISMLGNFAFFFGG) and 173 to 193 (PLGFVGVLVAMIVAPLAAMLV). A Zn(2+)-binding site is contributed by Glu-202. The disordered stretch occupies residues 284–318 (NVSTGPVRAVNPTRKSRSVPNTGRGGSQPPRGPWS).

This sequence belongs to the peptidase M48B family. Zn(2+) is required as a cofactor.

The protein localises to the cell inner membrane. The chain is Protease HtpX homolog from Rhizobium etli (strain ATCC 51251 / DSM 11541 / JCM 21823 / NBRC 15573 / CFN 42).